The chain runs to 917 residues: MDYKETLLMPKTDFPMRGGLPNKEPQIQEKWDAEDQYHKALEKNKGNETFILHDGPPYANGNLHMGHALNKILKDFIVRYKTMQGFYAPYVPGWDTHGLPIEQALTKKGVDRKKMSTAEFREKCKEFALEQIELQKKDFRRLGVRGDFNDPYITLKPEYEAAQIRIFGEMADKGLIYKGKKPVYWSPSSESSLAEAEIEYHDKRSASIYVAFDVKDDKGVVDADAKFIIWTTTPWTIPSNVAITVHPELKYGQYNVDGEKYIIAEALSDAVAEALDWDKASIKLEKEYTGKELEYVVAQHPFLDRESLVINGDHVTTDAGTGCVHTAPGHGEDDYIVGQKYELPVISPIDDKGVFTEEGGQFEGMFYDKANKAVTDLLTEKGALLKLDFITHSYPHDWRTKKPVIFRATPQWFASISKVRQDILDAIENTNFKVNWGKTRIYNMVRDRGEWVISRQRVWGVPLPVFYAENGEIIMTKETVNHVADLFAEHGSNIWFEREAKDLLPEGFTHPGSPNGTFTKETDIMDVWFDSGSSHRGVLETRPELSFPADMYLEGSDQYRGWFNSSITTSVATRGVSPYKFLLSHGFVMDGEGKKMSKSLGNVIVPDQVVKQKGADIARLWVSSTDYLADVRISDEILKQTSDVYRKIRNTLRFMLGNINDFNPDTDSITESELLEVDRYLLNRLREFTASTINNYENFDYLNIYQEVQNFINVELSNFYLDYGKDILYIEQRDSHIRRSMQTVLYQILVDMTKLLAPILVHTAEEVWSHTPHVKEESVHLADMPKVVEVDQALLDKWRTFMNLRDDVNRALETARNEKVIGKSLEAKVTIASNDKFNASEFLTSFDALHQLFIVSQVKVVDKLDDQATAYEHGDIVIEHADGEKCERCWNYSEDLGAVDELTHLCPRCQQVVKSLV.

A 'HIGH' region motif is present at residues Pro-57–His-67. Glu-554 is an L-isoleucyl-5'-AMP binding site. The 'KMSKS' region signature appears at Lys-595 to Ser-599. Position 598 (Lys-598) interacts with ATP. Zn(2+)-binding residues include Cys-886, Cys-889, Cys-906, and Cys-909.

The protein belongs to the class-I aminoacyl-tRNA synthetase family. IleS type 1 subfamily. In terms of assembly, monomer. Requires Zn(2+) as cofactor.

The protein resides in the cytoplasm. It catalyses the reaction tRNA(Ile) + L-isoleucine + ATP = L-isoleucyl-tRNA(Ile) + AMP + diphosphate. Its function is as follows. Catalyzes the attachment of isoleucine to tRNA(Ile). As IleRS can inadvertently accommodate and process structurally similar amino acids such as valine, to avoid such errors it has two additional distinct tRNA(Ile)-dependent editing activities. One activity is designated as 'pretransfer' editing and involves the hydrolysis of activated Val-AMP. The other activity is designated 'posttransfer' editing and involves deacylation of mischarged Val-tRNA(Ile). This is Isoleucine--tRNA ligase (ileS) from Staphylococcus aureus (strain MSSA476).